We begin with the raw amino-acid sequence, 220 residues long: Adenylate kinase (220 aa).

13–18 (GAGKGT) is an ATP binding site. The tract at residues 33 to 62 (STGDILRAAVKEGTPLGLEAQSYMNRGALV) is NMP. Residues Thr-34, Arg-39, 60-62 (ALV), 88-91 (GFPR), and Gln-95 each bind AMP. Residues 129–170 (GRRTCPLCKRIFHVRFNPPPAAPPFCTDHTDCPSELVQRPDD) form an LID region. Arg-130 provides a ligand contact to ATP. Zn(2+) contacts are provided by Cys-133 and Cys-136. ATP is bound at residue 139–140 (IF). 2 residues coordinate Zn(2+): Asp-156 and Cys-160. AMP contacts are provided by Arg-167 and Arg-178. Arg-206 serves as a coordination point for ATP.

The protein belongs to the adenylate kinase family. In terms of assembly, monomer.

It is found in the cytoplasm. It carries out the reaction AMP + ATP = 2 ADP. Its pathway is purine metabolism; AMP biosynthesis via salvage pathway; AMP from ADP: step 1/1. In terms of biological role, catalyzes the reversible transfer of the terminal phosphate group between ATP and AMP. Plays an important role in cellular energy homeostasis and in adenine nucleotide metabolism. The protein is Adenylate kinase of Gloeobacter violaceus (strain ATCC 29082 / PCC 7421).